Here is a 302-residue protein sequence, read N- to C-terminus: Succinate--CoA ligase [ADP-forming] subunit alpha (302 aa).

CoA is bound by residues 17 to 20 (TGST), Lys-43, and 96 to 98 (ITE). Position 159 (Tyr-159) interacts with substrate. His-247 serves as the catalytic Tele-phosphohistidine intermediate.

It belongs to the succinate/malate CoA ligase alpha subunit family. In terms of assembly, heterotetramer of two alpha and two beta subunits.

It catalyses the reaction succinate + ATP + CoA = succinyl-CoA + ADP + phosphate. It carries out the reaction GTP + succinate + CoA = succinyl-CoA + GDP + phosphate. It participates in carbohydrate metabolism; tricarboxylic acid cycle; succinate from succinyl-CoA (ligase route): step 1/1. Functionally, succinyl-CoA synthetase functions in the citric acid cycle (TCA), coupling the hydrolysis of succinyl-CoA to the synthesis of either ATP or GTP and thus represents the only step of substrate-level phosphorylation in the TCA. The alpha subunit of the enzyme binds the substrates coenzyme A and phosphate, while succinate binding and nucleotide specificity is provided by the beta subunit. The protein is Succinate--CoA ligase [ADP-forming] subunit alpha of Staphylococcus aureus (strain MRSA252).